The following is a 185-amino-acid chain: Photosystem I assembly protein Ycf4 (185 aa).

2 consecutive transmembrane segments (helical) span residues 20-40 (GNFF…SVGA) and 57-77 (ILFF…LFIS).

The protein belongs to the Ycf4 family.

It localises to the plastid. Its subcellular location is the chloroplast thylakoid membrane. Its function is as follows. Seems to be required for the assembly of the photosystem I complex. This Agrostis stolonifera (Creeping bentgrass) protein is Photosystem I assembly protein Ycf4.